Consider the following 367-residue polypeptide: Glutamate 5-kinase (367 aa).

Lysine 10 is an ATP binding site. Substrate contacts are provided by serine 50, aspartate 137, and asparagine 149. Residues 169–170 (TD) and 211–217 (TGGMSTK) each bind ATP. In terms of domain architecture, PUA spans 275–353 (AGEITVDDGA…QQIAEILGYE (79 aa)).

Belongs to the glutamate 5-kinase family.

Its subcellular location is the cytoplasm. The catalysed reaction is L-glutamate + ATP = L-glutamyl 5-phosphate + ADP. It functions in the pathway amino-acid biosynthesis; L-proline biosynthesis; L-glutamate 5-semialdehyde from L-glutamate: step 1/2. In terms of biological role, catalyzes the transfer of a phosphate group to glutamate to form L-glutamate 5-phosphate. The chain is Glutamate 5-kinase from Pectobacterium atrosepticum (strain SCRI 1043 / ATCC BAA-672) (Erwinia carotovora subsp. atroseptica).